Reading from the N-terminus, the 65-residue chain is Large ribosomal subunit protein bL35 (65 aa).

Residues 1–16 (MPKQKTHRASAKRFKR) are compositionally biased toward basic residues. Positions 1-21 (MPKQKTHRASAKRFKRTGSGG) are disordered.

Belongs to the bacterial ribosomal protein bL35 family.

The protein is Large ribosomal subunit protein bL35 of Streptococcus pyogenes serotype M18 (strain MGAS8232).